The primary structure comprises 486 residues: Protein nucleotidyltransferase YdiU (486 aa).

Positions 90, 92, 93, 113, 125, 126, 176, and 183 each coordinate ATP. Asp252 functions as the Proton acceptor in the catalytic mechanism. Mg(2+) contacts are provided by Asn253 and Asp262. Asp262 is an ATP binding site.

This sequence belongs to the SELO family. The cofactor is Mg(2+). It depends on Mn(2+) as a cofactor.

It catalyses the reaction L-seryl-[protein] + ATP = 3-O-(5'-adenylyl)-L-seryl-[protein] + diphosphate. The enzyme catalyses L-threonyl-[protein] + ATP = 3-O-(5'-adenylyl)-L-threonyl-[protein] + diphosphate. It carries out the reaction L-tyrosyl-[protein] + ATP = O-(5'-adenylyl)-L-tyrosyl-[protein] + diphosphate. The catalysed reaction is L-histidyl-[protein] + UTP = N(tele)-(5'-uridylyl)-L-histidyl-[protein] + diphosphate. It catalyses the reaction L-seryl-[protein] + UTP = O-(5'-uridylyl)-L-seryl-[protein] + diphosphate. The enzyme catalyses L-tyrosyl-[protein] + UTP = O-(5'-uridylyl)-L-tyrosyl-[protein] + diphosphate. Nucleotidyltransferase involved in the post-translational modification of proteins. It can catalyze the addition of adenosine monophosphate (AMP) or uridine monophosphate (UMP) to a protein, resulting in modifications known as AMPylation and UMPylation. The sequence is that of Protein nucleotidyltransferase YdiU from Pseudomonas paraeruginosa (strain DSM 24068 / PA7) (Pseudomonas aeruginosa (strain PA7)).